A 514-amino-acid chain; its full sequence is 5'-AMP-activated protein kinase subunit gamma-3 (514 aa).

Disordered regions lie at residues 1 to 121 (MELA…FPKA) and 134 to 155 (DNPPTERDILPSDCAASASDSN). A compositionally biased stretch (polar residues) spans 59–71 (SRSWPSRAVTTSS). 3 CBS domains span residues 222–283 (MATS…RSPL), 305–363 (CFKP…GTLL), and 380–440 (TFRD…HLDM). ADP-binding positions include Arg-250, 265-270 (MLTITD), Val-310, 331-332 (HR), and Lys-350. AMP contacts are provided by residues Arg-250, 265-270 (MLTITD), Val-310, His-331, 331-332 (HR), Lys-350, Thr-380, Ala-385, 406-407 (SA), 422-425 (SRFD), Arg-449, Leu-457, His-478, 478-479 (HR), and 494-497 (SLSD). ATP-binding positions include Arg-250, 265 to 270 (MLTITD), Val-310, 331 to 332 (HR), Arg-332, and Lys-350. An AMPK pseudosubstrate motif is present at residues 318 to 339 (LFEAVYALIKNRIHRLPVLDPV). Residues 422 to 425 (SRFD), Arg-449, Leu-457, and 478 to 479 (HR) each bind ADP. Residues 422 to 425 (SRFD), Arg-449, Leu-457, and 478 to 479 (HR) contribute to the ATP site. Positions 452–511 (CLEGVLSCQPHETLGEVIDRIVREQVHRLVLVDETQHLLGVVSLSDILQALVLSPAGIDA) constitute a CBS 4 domain.

It belongs to the 5'-AMP-activated protein kinase gamma subunit family. In terms of assembly, AMPK is a heterotrimer of an alpha catalytic subunit (PRKAA1 or PRKAA2), a beta (PRKAB1 or PRKAB2) and a gamma non-catalytic subunits (PRKAG1, PRKAG2 or PRKAG3). Interacts with FNIP1 and FNIP2. Phosphorylated by ULK1; leading to negatively regulate AMPK activity and suggesting the existence of a regulatory feedback loop between ULK1 and AMPK. Post-translationally, glycosylated; O-GlcNAcylated by OGT, promoting the AMP-activated protein kinase (AMPK) activity. As to expression, muscle.

In terms of biological role, AMP/ATP-binding subunit of AMP-activated protein kinase (AMPK), an energy sensor protein kinase that plays a key role in regulating cellular energy metabolism. In response to reduction of intracellular ATP levels, AMPK activates energy-producing pathways and inhibits energy-consuming processes: inhibits protein, carbohydrate and lipid biosynthesis, as well as cell growth and proliferation. AMPK acts via direct phosphorylation of metabolic enzymes, and by longer-term effects via phosphorylation of transcription regulators. AMPK also acts as a regulator of cellular polarity by remodeling the actin cytoskeleton; probably by indirectly activating myosin. The AMPK gamma3 subunit is a non-catalytic subunit with a regulatory role in muscle energy metabolism. It mediates binding to AMP, ADP and ATP, leading to AMPK activation or inhibition: AMP-binding results in allosteric activation of alpha catalytic subunit (PRKAA1 or PRKAA2) both by inducing phosphorylation and preventing dephosphorylation of catalytic subunits. ADP also stimulates phosphorylation, without stimulating already phosphorylated catalytic subunit. ATP promotes dephosphorylation of catalytic subunit, rendering the AMPK enzyme inactive. This Sus scrofa (Pig) protein is 5'-AMP-activated protein kinase subunit gamma-3 (PRKAG3).